The following is a 26-amino-acid chain: L-amino-acid oxidase (26 aa).

This sequence belongs to the flavin monoamine oxidase family. As to quaternary structure, monomer. Requires FAD as cofactor. Post-translationally, not glycosylated. Expressed by the ink gland.

It is found in the secreted. It carries out the reaction an L-alpha-amino acid + O2 + H2O = a 2-oxocarboxylate + H2O2 + NH4(+). Functionally, catalyzes the oxidative deamination of positively charged L-amino acids L-Lys and L-Arg but not of amino acids L-His, L-Asp or L-Glu. Has antibacterial activity against the Gram-positive bacterium S.aureus (MIC=15 ug/ml). This antibacterial activity is bacteriostatic in the absence of amino acids L-Lys or L-Arg but bactericidal in their presence. The antibacterial effect is largely dependent on H(2)O(2) produced in the oxidative deamination of substrates. Has hemagglutinating activity towards rabbit erythrocytes. Hemagglutinating activity is inhibited by the glycoprotein fetuin, but not by glucose, mannose, galactose, N-acetylglucosamine, N-acetylgalactosamine or sialic acid. In Aplysia dactylomela (Spotted sea hare), this protein is L-amino-acid oxidase.